Consider the following 76-residue polypeptide: Omega-agatoxin-Aa3b (76 aa).

6 disulfides stabilise this stretch: Cys2–Cys19, Cys9–Cys25, Cys16–Cys52, Cys18–Cys40, Cys27–Cys38, and Cys59–Cys67.

It belongs to the neurotoxin 04 (omega-agtx) family. 03 (type II/III omega-agtx) subfamily. As to expression, expressed by the venom gland.

It localises to the secreted. Omega-agatoxins are antagonists of voltage-gated calcium channels. This toxin blocks calcium channels in insect central neurons but not at peripheral neuromuscular junctions. In vertebrates, it is broadly active against all high-threshold Cav1/CACNA1 channels and Cav2.2/CACNA1B channels. The sequence is that of Omega-agatoxin-Aa3b from Agelenopsis aperta (North American funnel-web spider).